The primary structure comprises 471 residues: Heat shock 70 kDa protein 13 (471 aa).

The first 22 residues, 1–22 (MAGEMTILGSAVLTLLLAGYLA), serve as a signal peptide directing secretion. Positions 317 to 330 (DSKEPQNGDSELPK) are enriched in basic and acidic residues. Residues 317-350 (DSKEPQNGDSELPKDQLTPGDGHHVNRVFRPGLS) are disordered.

This sequence belongs to the heat shock protein 70 family. As to quaternary structure, binds UBQLN2.

The protein resides in the microsome. It localises to the endoplasmic reticulum. Its function is as follows. Has peptide-independent ATPase activity. The protein is Heat shock 70 kDa protein 13 (Hspa13) of Mus musculus (Mouse).